The chain runs to 336 residues: Tryptophan--tRNA ligase (336 aa).

Residues 11-13 and 19-20 contribute to the ATP site; these read TTT and GN. Positions 12–20 match the 'HIGH' region motif; it reads TTGIPHLGN. L-tryptophan is bound at residue D145. ATP-binding positions include 157–159, L196, and 203–207; these read GRD and KMSKS. Residues 203 to 207 carry the 'KMSKS' region motif; it reads KMSKS.

This sequence belongs to the class-I aminoacyl-tRNA synthetase family. In terms of assembly, homodimer.

Its subcellular location is the cytoplasm. It catalyses the reaction tRNA(Trp) + L-tryptophan + ATP = L-tryptophyl-tRNA(Trp) + AMP + diphosphate + H(+). Functionally, catalyzes the attachment of tryptophan to tRNA(Trp). The protein is Tryptophan--tRNA ligase of Neisseria meningitidis serogroup A / serotype 4A (strain DSM 15465 / Z2491).